Here is a 306-residue protein sequence, read N- to C-terminus: Agmatinase (306 aa).

The Mn(2+) site is built by His-126, Asp-149, His-151, Asp-153, Asp-230, and Asp-232.

This sequence belongs to the arginase family. Agmatinase subfamily. Requires Mn(2+) as cofactor.

The catalysed reaction is agmatine + H2O = urea + putrescine. Its pathway is amine and polyamine biosynthesis; putrescine biosynthesis via agmatine pathway; putrescine from agmatine: step 1/1. Functionally, catalyzes the formation of putrescine from agmatine. In Escherichia coli O7:K1 (strain IAI39 / ExPEC), this protein is Agmatinase.